The following is a 666-amino-acid chain: uncharacterized protein (666 aa).

The region spanning 263-553 (RFDLTTLKTY…THFQMKAYLR (291 aa)) is the RNB domain.

It belongs to the RNR ribonuclease family.

This is an uncharacterized protein from Synechocystis sp. (strain ATCC 27184 / PCC 6803 / Kazusa).